We begin with the raw amino-acid sequence, 200 residues long: Small ribosomal subunit protein uS4 (200 aa).

The interval threonine 22–lysine 42 is disordered. One can recognise an S4 RNA-binding domain in the interval alanine 92–lysine 152.

The protein belongs to the universal ribosomal protein uS4 family. Part of the 30S ribosomal subunit. Contacts protein S5. The interaction surface between S4 and S5 is involved in control of translational fidelity.

Functionally, one of the primary rRNA binding proteins, it binds directly to 16S rRNA where it nucleates assembly of the body of the 30S subunit. Its function is as follows. With S5 and S12 plays an important role in translational accuracy. The protein is Small ribosomal subunit protein uS4 of Bacillus cereus (strain Q1).